We begin with the raw amino-acid sequence, 437 residues long: 23S rRNA (uracil(1939)-C(5))-methyltransferase RlmD (437 aa).

The TRAM domain maps to 10–68; it reads SAPRNTTFVAEILDLDYQGRGVAKVQGKTWFIENALPQEKVEVRIVDEKRHYGHGISCK. The [4Fe-4S] cluster site is built by Cys-81, Cys-87, Cys-90, and Cys-167. S-adenosyl-L-methionine is bound by residues Gln-270, Phe-299, Asn-304, Glu-320, Asn-347, and Asp-368. The active-site Nucleophile is Cys-394.

The protein belongs to the class I-like SAM-binding methyltransferase superfamily. RNA M5U methyltransferase family. RlmD subfamily.

It catalyses the reaction uridine(1939) in 23S rRNA + S-adenosyl-L-methionine = 5-methyluridine(1939) in 23S rRNA + S-adenosyl-L-homocysteine + H(+). Catalyzes the formation of 5-methyl-uridine at position 1939 (m5U1939) in 23S rRNA. This is 23S rRNA (uracil(1939)-C(5))-methyltransferase RlmD from Pasteurella multocida (strain Pm70).